A 239-amino-acid chain; its full sequence is uncharacterized protein (239 aa).

A disordered region spans residues 104-127 (LPATSQSSQPKSTNSSTESSSIGQ). Residues 107 to 127 (TSQSSQPKSTNSSTESSSIGQ) show a composition bias toward low complexity. Positions 134-202 (ENEINLNKNK…HFIQNNQESF (69 aa)) form a coiled coil. A helical membrane pass occupies residues 211–231 (VKIGSAFIIYIFYNVLFFIIV).

Its subcellular location is the membrane. This is an uncharacterized protein from Dictyostelium discoideum (Social amoeba).